We begin with the raw amino-acid sequence, 173 residues long: Photosystem I assembly protein Ycf3 (173 aa).

3 TPR repeats span residues 35-68 (AFSY…EEDP), 72-105 (SYIL…NFKL), and 120-153 (GVQA…APDN).

Belongs to the Ycf3 family.

Its subcellular location is the plastid. It is found in the chloroplast thylakoid membrane. Essential for the assembly of the photosystem I (PSI) complex. May act as a chaperone-like factor to guide the assembly of the PSI subunits. This chain is Photosystem I assembly protein Ycf3, found in Porphyra purpurea (Red seaweed).